The primary structure comprises 1094 residues: MAGGAHRADRATGEERKEGGGRWRAPHSPSPPGPRGCPVPLKAAAQSLCRKPTWGRYCTLLLFQRKLEIYSVELHAATDIKKKEGRDGKKDNDLELKRNQQKEELKKELDLDDHKLSNKELETKYGTDIIRGLSSTRAAELLAQNGPNALTPPKQTPEIIKFLKQMVGGFSILLWVGAVLCWIAFGIQYVSNPSASLDRVYLGTVLAVVVILTGIFAYYQEAKSTNIMASFCKMIPQQAVVIRDSEKKVIPAEQLVVGDIVEIKGGDQIPADIRLLSAQGCKVDNSSLTGESEPQSRSSGFTHENPLETKNITFYSTTCLEGTATGMVINTGDRTIIGRIASLASGVGNEKTPIAIEIEHFVHIVAGVAVSVGILFFIIAVCMKYHVLDAIIFLIAIIVANVPEGLLATVTVALSLTAKRVAKKNCLVKNLEAVETLGSTSIICSDKTGTLTQNRMTVAHLWFDNQIFVADTSEDNLNQGFDQSSGTWTSLSKIIALCNRAEFKPGEESVPIMKRVVVGDASETALLKFSEVILGDVMEIRKRNHKVVEIPFNSTNKFQLSIHQTEDPNDKRFLLVMKGAPERILEKCSTIMINGKEQPLDKSMAQAFHTAYMELGGLGERVLGFCHFYLPADEFPETYSFDSESMNFPTSNLCFVGLLSMIDPPRSTVPDAVTKCRSAGIKVIMVTGDHPITAKAIAKSVGIISANSETVEDIAKRCNIAVEQVNKRDAKAAVVTGMELKDMSPEQLDELLANYPEIVFARTSPQQKLIIVEGCQRQDAVVAVTGDGVNDSPALKKADIGVAMGITGSDAAKNAADMILLDDNFSSIVTGVEEGRLIFDNLKKTIAYTLTKNIAELCPFLIYIILGLPLPIGTITLLFIDLGTDIIPSIALAYEKAESDIMNRKPRHKKKDRLVNQQLAVYSYLHIGLMQALGAFLVYFTVYAQQGFRPTSLFHLRIAWDSDHLNDLEDNYGQEWTSYQRQYLEWTGYTAFFVGIMVQQIADLIIRKTRKNSIFKQGLFRNKVIWVGIASQIIVALLLSYGLGSITALNFTMLKAQYWFVAVPHAILIWVYDEMRKLFIRLYPGSWWDKNMYY.

The segment covering 1 to 21 (MAGGAHRADRATGEERKEGGG) has biased composition (basic and acidic residues). Residues 1-37 (MAGGAHRADRATGEERKEGGGRWRAPHSPSPPGPRGC) are disordered. A compositionally biased stretch (pro residues) spans 28–37 (SPSPPGPRGC). The Cytoplasmic segment spans residues 56–157 (RYCTLLLFQR…NALTPPKQTP (102 aa)). A helical membrane pass occupies residues 158-178 (EIIKFLKQMVGGFSILLWVGA). The Lumenal segment spans residues 179–201 (VLCWIAFGIQYVSNPSASLDRVY). A helical transmembrane segment spans residues 202–222 (LGTVLAVVVILTGIFAYYQEA). Residues 223–358 (KSTNIMASFC…NEKTPIAIEI (136 aa)) lie on the Cytoplasmic side of the membrane. The disordered stretch occupies residues 286 to 305 (SSLTGESEPQSRSSGFTHEN). A helical membrane pass occupies residues 359–378 (EHFVHIVAGVAVSVGILFFI). The Lumenal portion of the chain corresponds to 379-390 (IAVCMKYHVLDA). A helical membrane pass occupies residues 391–408 (IIFLIAIIVANVPEGLLA). The Cytoplasmic segment spans residues 409–842 (TVTVALSLTA…EEGRLIFDNL (434 aa)). Asp446 acts as the 4-aspartylphosphate intermediate in catalysis. Mg(2+)-binding residues include Asp787 and Asp791. A helical transmembrane segment spans residues 843–862 (KKTIAYTLTKNIAELCPFLI). At 863–872 (YIILGLPLPI) the chain is on the lumenal side. A helical transmembrane segment spans residues 873-893 (GTITLLFIDLGTDIIPSIALA). Topologically, residues 894–913 (YEKAESDIMNRKPRHKKKDR) are cytoplasmic. A helical membrane pass occupies residues 914–936 (LVNQQLAVYSYLHIGLMQALGAF). Over 937–988 (LVYFTVYAQQGFRPTSLFHLRIAWDSDHLNDLEDNYGQEWTSYQRQYLEWTG) the chain is Lumenal. The helical transmembrane segment at 989-1008 (YTAFFVGIMVQQIADLIIRK) threads the bilayer. At 1009–1022 (TRKNSIFKQGLFRN) the chain is on the cytoplasmic side. Position 1013 is a phosphoserine; by PKA (Ser1013). A helical transmembrane segment spans residues 1023–1041 (KVIWVGIASQIIVALLLSY). The Lumenal segment spans residues 1042–1056 (GLGSITALNFTMLKA). The helical transmembrane segment at 1057 to 1077 (QYWFVAVPHAILIWVYDEMRK) threads the bilayer. The Cytoplasmic segment spans residues 1078-1094 (LFIRLYPGSWWDKNMYY).

It belongs to the cation transport ATPase (P-type) (TC 3.A.3) family. Type IIC subfamily. As to quaternary structure, the X(+)/K(+) ATPase pump is composed of a catalytic alpha subunit and an auxiliary non-catalytic beta subunit. The alpha subunit pairs with the beta subunit of gastric H(+)/K(+) ATPase ATP4B or the beta subunit of Na(+)/K(+) ATPases ATP1B1 and ATP1B3; this interaction is required for the formation of a functionally active pump and its targeting at the plasma membrane. As to expression, found in the skin, kidney, distal colon and brain. In the kidney it is found in the connecting tubule, cortical collecting duct and outer medullary collecting duct while in the brain it is specific to choroid plexus and cortex.

Its subcellular location is the apical cell membrane. The catalysed reaction is K(+)(out) + ATP + H2O + H(+)(in) = K(+)(in) + ADP + phosphate + 2 H(+)(out). It catalyses the reaction K(+)(out) + Na(+)(in) + ATP + H2O = K(+)(in) + Na(+)(out) + ADP + phosphate + H(+). Functionally, the catalytic subunit of a H(+)/K(+) ATPase and/or Na(+)/K(+) ATPase pump which transports K(+) ions in exchange for Na(+) and/or H(+) ions across the apical membrane of epithelial cells. Uses ATP as an energy source to pump K(+) ions into the cell while transporting Na(+) and/or H(+) ions to the extracellular compartment. Involved in the maintenance of electrolyte homeostasis through K(+) ion absorption in kidney and colon. In the airway epithelium, may play a primary role in mucus acidification regulating its viscosity and clearance. The chain is Potassium-transporting ATPase alpha chain 2 (ATP12A) from Oryctolagus cuniculus (Rabbit).